Reading from the N-terminus, the 106-residue chain is UPF0145 protein CPF_0876 (106 aa).

This sequence belongs to the UPF0145 family.

This is UPF0145 protein CPF_0876 from Clostridium perfringens (strain ATCC 13124 / DSM 756 / JCM 1290 / NCIMB 6125 / NCTC 8237 / Type A).